Consider the following 217-residue polypeptide: THAP domain-containing protein 2 (217 aa).

A THAP-type zinc finger spans residues 1–80; that stretch reads MPTNCAAAGC…LKMDAVPTIF (80 aa). An HCFC1-binding motif (HBM) motif is present at residues 122-125; the sequence is EHSY.

The sequence is that of THAP domain-containing protein 2 (Thap2) from Mus musculus (Mouse).